The following is a 77-amino-acid chain: MATKFKIKKGDQVMVIAGDDKGKTGEVLQVLPKKEAVIVAGCKMAKKAIKPSEQNKEGGFANAEMPIHISNVKKVEA.

Belongs to the universal ribosomal protein uL24 family. In terms of assembly, part of the 50S ribosomal subunit.

One of two assembly initiator proteins, it binds directly to the 5'-end of the 23S rRNA, where it nucleates assembly of the 50S subunit. In terms of biological role, one of the proteins that surrounds the polypeptide exit tunnel on the outside of the subunit. This is Large ribosomal subunit protein uL24 from Sulfurovum sp. (strain NBC37-1).